Consider the following 359-residue polypeptide: Archaemetzincin-2 (359 aa).

A Zn(2+)-binding site is contributed by His254. Glu255 serves as the catalytic Proton acceptor. Residues His258, His264, Cys265, Cys270, Cys289, and Cys292 each coordinate Zn(2+).

This sequence belongs to the peptidase M54 family. Zn(2+) serves as cofactor. As to expression, predominantly expressed in testis.

Probable zinc metalloprotease. This chain is Archaemetzincin-2 (Amz2), found in Mus musculus (Mouse).